A 487-amino-acid polypeptide reads, in one-letter code: UDP-N-acetylmuramate--L-alanine ligase (487 aa).

Residue 126-132 participates in ATP binding; sequence GTHGKTT.

Belongs to the MurCDEF family.

Its subcellular location is the cytoplasm. It catalyses the reaction UDP-N-acetyl-alpha-D-muramate + L-alanine + ATP = UDP-N-acetyl-alpha-D-muramoyl-L-alanine + ADP + phosphate + H(+). It functions in the pathway cell wall biogenesis; peptidoglycan biosynthesis. Cell wall formation. In Psychromonas ingrahamii (strain DSM 17664 / CCUG 51855 / 37), this protein is UDP-N-acetylmuramate--L-alanine ligase.